The primary structure comprises 176 residues: Large ribosomal subunit protein uL22 (176 aa).

The interval 113–176 is disordered; that stretch reads VVESRPSKDQ…ETSEAKGGSD (64 aa). Positions 136 to 152 are enriched in low complexity; it reads SKAAATAPAKKSSASKA. Positions 159–176 are enriched in basic and acidic residues; sequence TKAESKTSETSEAKGGSD.

This sequence belongs to the universal ribosomal protein uL22 family. As to quaternary structure, part of the 50S ribosomal subunit.

This protein binds specifically to 23S rRNA; its binding is stimulated by other ribosomal proteins, e.g. L4, L17, and L20. It is important during the early stages of 50S assembly. It makes multiple contacts with different domains of the 23S rRNA in the assembled 50S subunit and ribosome. Its function is as follows. The globular domain of the protein is located near the polypeptide exit tunnel on the outside of the subunit, while an extended beta-hairpin is found that lines the wall of the exit tunnel in the center of the 70S ribosome. This is Large ribosomal subunit protein uL22 from Mycobacterium marinum (strain ATCC BAA-535 / M).